The sequence spans 348 residues: Dihydroorotase (348 aa).

Zn(2+) is bound by residues H14 and H16. Residues 16 to 18 (HLR) and N42 contribute to the substrate site. Zn(2+) contacts are provided by K100, H137, and H175. K100 carries the post-translational modification N6-carboxylysine. H137 serves as a coordination point for substrate. L220 serves as a coordination point for substrate. D248 contacts Zn(2+). The active site involves D248. Substrate-binding residues include H252 and A264.

The protein belongs to the metallo-dependent hydrolases superfamily. DHOase family. Class II DHOase subfamily. As to quaternary structure, homodimer. Zn(2+) is required as a cofactor.

The enzyme catalyses (S)-dihydroorotate + H2O = N-carbamoyl-L-aspartate + H(+). Its pathway is pyrimidine metabolism; UMP biosynthesis via de novo pathway; (S)-dihydroorotate from bicarbonate: step 3/3. Catalyzes the reversible cyclization of carbamoyl aspartate to dihydroorotate. The sequence is that of Dihydroorotase from Ectopseudomonas mendocina (strain ymp) (Pseudomonas mendocina).